The sequence spans 264 residues: Thymidylate synthase (264 aa).

Position 21 (Arg-21) interacts with dUMP. His-51 contributes to the (6R)-5,10-methylene-5,6,7,8-tetrahydrofolate binding site. A dUMP-binding site is contributed by 126 to 127 (RR). The active-site Nucleophile is Cys-146. DUMP-binding positions include 166 to 169 (RSCD), Asn-177, and 207 to 209 (HLY). Asp-169 provides a ligand contact to (6R)-5,10-methylene-5,6,7,8-tetrahydrofolate. Ala-263 provides a ligand contact to (6R)-5,10-methylene-5,6,7,8-tetrahydrofolate.

Belongs to the thymidylate synthase family. Bacterial-type ThyA subfamily. As to quaternary structure, homodimer.

It is found in the cytoplasm. It catalyses the reaction dUMP + (6R)-5,10-methylene-5,6,7,8-tetrahydrofolate = 7,8-dihydrofolate + dTMP. Its pathway is pyrimidine metabolism; dTTP biosynthesis. Functionally, catalyzes the reductive methylation of 2'-deoxyuridine-5'-monophosphate (dUMP) to 2'-deoxythymidine-5'-monophosphate (dTMP) while utilizing 5,10-methylenetetrahydrofolate (mTHF) as the methyl donor and reductant in the reaction, yielding dihydrofolate (DHF) as a by-product. This enzymatic reaction provides an intracellular de novo source of dTMP, an essential precursor for DNA biosynthesis. The protein is Thymidylate synthase of Shewanella oneidensis (strain ATCC 700550 / JCM 31522 / CIP 106686 / LMG 19005 / NCIMB 14063 / MR-1).